Here is a 114-residue protein sequence, read N- to C-terminus: Iron-sulfur cluster insertion protein ErpA (114 aa).

Iron-sulfur cluster-binding residues include Cys42, Cys106, and Cys108.

The protein belongs to the HesB/IscA family. In terms of assembly, homodimer. It depends on iron-sulfur cluster as a cofactor.

Its function is as follows. Required for insertion of 4Fe-4S clusters for at least IspG. This Buchnera aphidicola subsp. Acyrthosiphon pisum (strain 5A) protein is Iron-sulfur cluster insertion protein ErpA.